The primary structure comprises 115 residues: Parathyroid hormone (115 aa).

A signal peptide spans 1–25 (MIPAKDMAKVMIVMLAICFLTKSDG). Residues 26–31 (KSVKKR) constitute a propeptide that is removed on maturation. Positions 51–69 (RVEWLRKKLQDVHNFIALG) are important for receptor binding. Positions 72–96 (LAPRDAGSQRPRKKEDNILVESHEK) are disordered. Residues 84 to 96 (KKEDNILVESHEK) show a composition bias toward basic and acidic residues.

It belongs to the parathyroid hormone family. In terms of assembly, interacts with PTH1R (via N-terminal extracellular domain).

It localises to the secreted. In terms of biological role, parathyroid hormone elevates calcium level by dissolving the salts in bone and preventing their renal excretion. Acts by binding to its receptor, PTH1R, activating G protein-coupled receptor signaling. Stimulates [1-14C]-2-deoxy-D-glucose (2DG) transport and glycogen synthesis in osteoblastic cells. This is Parathyroid hormone (PTH) from Macaca fascicularis (Crab-eating macaque).